Here is a 1036-residue protein sequence, read N- to C-terminus: Mitogen-activated protein kinase kinase kinase 21 (1036 aa).

The disordered stretch occupies residues 1–36 (MALRGAAGATDTPVSSAGGAPGGSASSSSTSSGGSA). Low complexity predominate over residues 15–36 (SSAGGAPGGSASSSSTSSGGSA). The region spanning 38-102 (AGAGLWAALY…PANYVAPCRP (65 aa)) is the SH3 domain. Residues 124 to 401 (LELKELIGAG…ALILEQLTAI (278 aa)) enclose the Protein kinase domain. ATP contacts are provided by residues 130–138 (IGAGGFGQV) and K151. D263 (proton acceptor) is an active-site residue. T299 bears the Phosphothreonine; by autocatalysis mark. Position 303 is a phosphoserine; by autocatalysis and MAP4K1 (S303). Leucine-zipper stretches follow at residues 425–446 (IQQM…EEEL) and 460–481 (LKRR…ELNI). The segment at 517–551 (SDFQHKITVQASPNLDKRRSLNSSSSSPPSSPTMM) is disordered. A phosphoserine mark is found at S528, S543, and S547. Phosphothreonine is present on T592. S614 is subject to Phosphoserine. The segment covering 748–763 (AEEPLPKEEKKKREGI) has biased composition (basic and acidic residues). Disordered regions lie at residues 748-791 (AEEP…SSPP) and 923-954 (PHSH…RSRS).

It belongs to the protein kinase superfamily. STE Ser/Thr protein kinase family. MAP kinase kinase kinase subfamily. As to quaternary structure, homodimer. Interacts with TLR4. Mg(2+) serves as cofactor. Autophosphorylation on serine and threonine residues within the activation loop plays a role in enzyme activation.

It catalyses the reaction L-seryl-[protein] + ATP = O-phospho-L-seryl-[protein] + ADP + H(+). The enzyme catalyses L-threonyl-[protein] + ATP = O-phospho-L-threonyl-[protein] + ADP + H(+). Homodimerization via the leucine zipper domains is required for autophosphorylation and subsequent activation. Its function is as follows. Negative regulator of TLR4 signaling. Does not activate JNK1/MAPK8 pathway, p38/MAPK14, nor ERK2/MAPK1 pathways. In Homo sapiens (Human), this protein is Mitogen-activated protein kinase kinase kinase 21.